The following is a 106-amino-acid chain: Halilectin 3, beta chain (106 aa).

Residue N65 is glycosylated (N-linked (GlcNAc...) asparagine).

In terms of assembly, probable heterotrimer consisting of an alpha chain and two beta chains. The alpha chain can probably have different glycosylation states. In terms of processing, glycosylated.

Lectin with affinity for N-acetyl-galactosamine, carragenan and glycoprotein porcine stomach mucin (PSM). Has metal-independent hemagglutinating activity towards erythrocytes from rabbit and human. Hemagglutinating activity is not inhibited by D-galactose, D-glucose, D-mannose, D-fucose, methyl-alpha-D-galactopyranoside, methyl-alpha-D-glucopyranoside, N-acetyl-glucosamine, N-acetyl-mannosamine, D-fructose, alpha-D-lactose, beta-D-lactose, D-lactulose, D-sucrose, fucoidan or glycoproteins thyroglobulin and ovalmucoid. The chain is Halilectin 3, beta chain from Haliclona caerulea (Blue Caribbean sponge).